The primary structure comprises 785 residues: Phenylalanine--tRNA ligase beta subunit (785 aa).

One can recognise a tRNA-binding domain in the interval 39–150 (RTWAAGVVVG…ASLPLGLDVG (112 aa)). A B5 domain is found at 400 to 476 (RENRVVSLRP…RVVGYDRFAP (77 aa)). Asp-454, Asp-460, Glu-463, and Glu-464 together coordinate Mg(2+). Residues 692-784 (SPFPPAARDL…LAERYSVDLR (93 aa)) enclose the FDX-ACB domain.

Belongs to the phenylalanyl-tRNA synthetase beta subunit family. Type 1 subfamily. In terms of assembly, tetramer of two alpha and two beta subunits. Requires Mg(2+) as cofactor.

It is found in the cytoplasm. The catalysed reaction is tRNA(Phe) + L-phenylalanine + ATP = L-phenylalanyl-tRNA(Phe) + AMP + diphosphate + H(+). In Gloeobacter violaceus (strain ATCC 29082 / PCC 7421), this protein is Phenylalanine--tRNA ligase beta subunit.